The chain runs to 497 residues: MSSTTDATPTPSGVNGGDSMTVNLNQFYNNGDVAWILTSTALVFIMIPGVGFFYSGLARRRSAISMLFLSMMSVAIVAFQWFFWGYSLTFSHEGGPYIGSLANFGLRQTLGRPSSGASSVPDILFCVFQGMFAAITPALAIGAAADRGRMFPCMVFMFLWTSIVYDPIAFWTWNPNGWLNKLGSYDFAGGSPVHISSGMAALAYSIVIGKRCDHGTTKYRPHNVPHVVLGTVFLWFGWFGFNGGSSAAANMRGVMAVVVTHLAASVGGIVWCVIDFAKNRHWSVVGFCEGAVAGLVAITPGSGFVPPWAAVVIGALGAVFCYAATYLKKIIRVDDALDIFAEHGVGGMVGNILTALFAADYIEALDGSGTAYTGGWITHHYIQLGYQLADTVSCAAYSFAVSCALLFVMNYIPGLSLRVSREDEVLGLDKIELGESAYYYKDSTDEPPPITTSGVQYTSPTVSDSASNEKEQEHRAQNEAQKEEEYRAESEAQAPAI.

Topologically, residues 1–32 (MSSTTDATPTPSGVNGGDSMTVNLNQFYNNGD) are extracellular. The helical transmembrane segment at 33-53 (VAWILTSTALVFIMIPGVGFF) threads the bilayer. Topologically, residues 54-63 (YSGLARRRSA) are cytoplasmic. Residues 64–84 (ISMLFLSMMSVAIVAFQWFFW) form a helical membrane-spanning segment. At 85 to 122 (GYSLTFSHEGGPYIGSLANFGLRQTLGRPSSGASSVPD) the chain is on the extracellular side. Residues 123-143 (ILFCVFQGMFAAITPALAIGA) form a helical membrane-spanning segment. Topologically, residues 144–150 (AADRGRM) are cytoplasmic. Residues 151-171 (FPCMVFMFLWTSIVYDPIAFW) traverse the membrane as a helical segment. The Extracellular segment spans residues 172 to 187 (TWNPNGWLNKLGSYDF). Residues 188-208 (AGGSPVHISSGMAALAYSIVI) form a helical membrane-spanning segment. Topologically, residues 209–223 (GKRCDHGTTKYRPHN) are cytoplasmic. Residues 224–244 (VPHVVLGTVFLWFGWFGFNGG) traverse the membrane as a helical segment. The Extracellular portion of the chain corresponds to 245 to 253 (SSAAANMRG). The chain crosses the membrane as a helical span at residues 254–274 (VMAVVVTHLAASVGGIVWCVI). The Cytoplasmic portion of the chain corresponds to 275–281 (DFAKNRH). The chain crosses the membrane as a helical span at residues 282–302 (WSVVGFCEGAVAGLVAITPGS). A topological domain (extracellular) is located at residue G303. Residues 304 to 324 (FVPPWAAVVIGALGAVFCYAA) form a helical membrane-spanning segment. Topologically, residues 325-338 (TYLKKIIRVDDALD) are cytoplasmic. A helical transmembrane segment spans residues 339–359 (IFAEHGVGGMVGNILTALFAA). Over 360-394 (DYIEALDGSGTAYTGGWITHHYIQLGYQLADTVSC) the chain is Extracellular. The chain crosses the membrane as a helical span at residues 395–415 (AAYSFAVSCALLFVMNYIPGL). The Cytoplasmic portion of the chain corresponds to 416-497 (SLRVSREDEV…AESEAQAPAI (82 aa)). The tract at residues 440–497 (YKDSTDEPPPITTSGVQYTSPTVSDSASNEKEQEHRAQNEAQKEEEYRAESEAQAPAI) is disordered. Polar residues predominate over residues 451–466 (TTSGVQYTSPTVSDSA). Over residues 467-490 (SNEKEQEHRAQNEAQKEEEYRAES) the composition is skewed to basic and acidic residues.

It belongs to the ammonia transporter channel (TC 1.A.11.2) family.

Its subcellular location is the membrane. Transporter for ammonium to use as a nitrogen source. Under ammonium limitation acts as an ammonium sensor, generating a signal that leads to pseudohyphal growth. The polypeptide is Ammonium transporter 1 (amt1) (Schizosaccharomyces pombe (strain 972 / ATCC 24843) (Fission yeast)).